Reading from the N-terminus, the 493-residue chain is GPI alpha-1,6-mannosyltransferase 2 (493 aa).

Residues 1-13 lie on the Cytoplasmic side of the membrane; sequence MGLLDPSQKEVLR. A helical membrane pass occupies residues 14–34; it reads FAVNCRILTLVLQALFNLIIP. The Lumenal portion of the chain corresponds to 35–77; the sequence is DHHADAFCPPRLAPSGSADQLVEGLLGGLSRWDAEHFLFIAEH. A helical membrane pass occupies residues 78–98; that stretch reads GYLYEHNFAFFPGFPLALLMG. Topologically, residues 99–113 are cytoplasmic; sequence TELLRPLQGLLSQRS. The chain crosses the membrane as a helical span at residues 114 to 134; sequence CLLVSVALLNLLFSVLAAVAL. The Lumenal segment spans residues 135–136; it reads HD. Residues 137 to 157 form a helical membrane-spanning segment; it reads LGCLVLHCPRQALCAALLFCI. The Cytoplasmic portion of the chain corresponds to 158 to 161; sequence SPAN. A helical membrane pass occupies residues 162 to 182; that stretch reads VFLAAGYSEALFAFLTFSAMG. The Lumenal segment spans residues 183-192; that stretch reads QLERGRGWAS. Residues 193-213 form a helical membrane-spanning segment; it reads GLLFALAAGVRSNGLVSLGFL. Over 214–234 the chain is Cytoplasmic; sequence LHSQCRGFCSSLAVLSPWKPL. The helical transmembrane segment at 235-255 threads the bilayer; that stretch reads VKLMASVCLSVLIVSLPFALF. The Lumenal portion of the chain corresponds to 256–327; that stretch reads QYRAYIQFCS…RYYELKQVPN (72 aa). Residues 328-348 traverse the membrane as a helical segment; that stretch reads FLLATPVTVLVVWATWTYVTT. Over 349-378 the chain is Cytoplasmic; that stretch reads HPWLCLTLGLQRTKDRENPEKPHRGFLSPK. The chain crosses the membrane as a helical span at residues 379 to 399; sequence VFVYLVHAAALLVFGGLCMHV. Residues 400 to 469 are Lumenal-facing; sequence QVLTRFLASS…DWKRCSPVTR (70 aa). A helical transmembrane segment spans residues 470–490; the sequence is CVLVYFLTYWLLGLILHCNFL. At 491–493 the chain is on the cytoplasmic side; it reads PWT.

Belongs to the PIGV family. In terms of processing, not N-glycosylated.

Its subcellular location is the endoplasmic reticulum membrane. It participates in glycolipid biosynthesis; glycosylphosphatidylinositol-anchor biosynthesis. Functionally, alpha-1,6-mannosyltransferase that catalyzes the transfer of the second mannose, via an alpha-1,6 bond, from a dolichol-phosphate-mannose (Dol-P-Man) to the alpha-D-Man-(1-&gt;4)-alpha-D-GlcN-(1-&gt;6)-(1-radyl,2-acyl-sn-glycero-3-phospho)-2-acyl-inositol (also termed H2) intermediate to generate an alpha-D-Man-(1-&gt;6)-alpha-D-Man-(1-&gt;4)-alpha-D-GlcN-(1-&gt;6)-(1-radyl,2-acyl-sn-glycero-3-phospho)-2-acyl-inositol (also termed H3) and participates in the seventh step of the glycosylphosphatidylinositol-anchor biosynthesis. Also transfers the second mannose on a 2-PEtn-alpha-D-Man-(1-&gt;4)-alpha-D-GlcN-(1-&gt;6)-(1-radyl,2-acyl-sn-glycero-3-phospho)-2-acyl-inositol (also termed H5). In Mus musculus (Mouse), this protein is GPI alpha-1,6-mannosyltransferase 2.